We begin with the raw amino-acid sequence, 334 residues long: tRNA uridine(34) hydroxylase (334 aa).

The Rhodanese domain occupies 123–217; that stretch reads SDPDVILVDT…YLEEVKAEES (95 aa). Cys177 functions as the Cysteine persulfide intermediate in the catalytic mechanism.

Belongs to the TrhO family.

It carries out the reaction uridine(34) in tRNA + AH2 + O2 = 5-hydroxyuridine(34) in tRNA + A + H2O. In terms of biological role, catalyzes oxygen-dependent 5-hydroxyuridine (ho5U) modification at position 34 in tRNAs. The sequence is that of tRNA uridine(34) hydroxylase from Shewanella baltica (strain OS223).